Here is a 290-residue protein sequence, read N- to C-terminus: Ribosome-inactivating protein bryodin I (290 aa).

Positions 1–23 are cleaved as a signal peptide; it reads MIKLLVLWLLILTIFLKSPTVEG. Residues Glu-183 and Glu-212 contribute to the active site. N-linked (GlcNAc...) asparagine glycans are attached at residues Asn-214 and Asn-250. The propeptide at 271 to 290 is removed in mature form; sequence AIGEDISMTLIGFEHGLYGI.

Belongs to the ribosome-inactivating protein family. Type 1 RIP subfamily. In terms of processing, appears to undergo proteolytic cleavage in the C-terminal to produce a shorter protein.

It carries out the reaction Endohydrolysis of the N-glycosidic bond at one specific adenosine on the 28S rRNA.. Its function is as follows. Ribosome-inactivating protein of type 1, inhibits protein synthesis in animal cells. The chain is Ribosome-inactivating protein bryodin I from Bryonia dioica (Red bryony).